The chain runs to 123 residues: MPTINQLVRHGRKRSVKKTNTPALKASPQKRGVCTRVYTTTPKKPNSALRKVARVRLTTGMEVTAYIPGVGHNLQEHSVVLVRGGRVKDLPGVRYHIVRGTLDSIGVQDRKQGRSHYGAKKPK.

Residues 1–32 (MPTINQLVRHGRKRSVKKTNTPALKASPQKRG) form a disordered region. The residue at position 89 (Asp-89) is a 3-methylthioaspartic acid.

This sequence belongs to the universal ribosomal protein uS12 family. In terms of assembly, part of the 30S ribosomal subunit. Contacts proteins S8 and S17. May interact with IF1 in the 30S initiation complex.

Its function is as follows. With S4 and S5 plays an important role in translational accuracy. Functionally, interacts with and stabilizes bases of the 16S rRNA that are involved in tRNA selection in the A site and with the mRNA backbone. Located at the interface of the 30S and 50S subunits, it traverses the body of the 30S subunit contacting proteins on the other side and probably holding the rRNA structure together. The combined cluster of proteins S8, S12 and S17 appears to hold together the shoulder and platform of the 30S subunit. This is Small ribosomal subunit protein uS12 from Desulfatibacillum aliphaticivorans.